The primary structure comprises 595 residues: MNVQPRNMNVQPRNMNVQPVRHKLFFSDTDEEEEDGHSTGEDSAFQESDSPVSRQREKQEGKPPGGTWEELEEEEGFGSSPIKSPGDFFMSDSPSYRQLAPASPTRSPQGPTSPIPECPGTPPHKTFRKLRLFDTPHTPKSLLSKARGIGSSALRFRGGTLFREAEKAPKPEFVYSTPQVNINPFTPDSLEIQSSAGLCRGRKRALLNDSCGEDMEGSDCELEDEDIRPAKRIPITESNMKSRYATEFHELEKIGSGEFGSVFKCVKRLDGCIYAIKRSKKPLAGSVDEQNALREVYAHAVLGQHPHVVRYYSAWAEDDHMLIQNEYCNGGSLSDVISENYRTMQYFTEPELKDLLLQVARGLKYIHSMSLVHMDIKPSNIFISRTTLPNTAVEEADDEECGSGKVIYKIGDLGHVTRVSSPQVEEGDSRFLANEVLQENYTHLAKADIFALALTVWSAAGAEPFPTNGDQWHEIRQGKLPRVPQLLSQEFVDLIKLMISPDPEKRPSSVALVKHSVLLSASRKSAEQLRIELDAEKFKNALLQKELKKAQIAKAAAEERAHFPDRIATRSTTQNNRTTRLIGKKMNRSVSLTIY.

A compositionally biased stretch (polar residues) spans 1 to 17; the sequence is MNVQPRNMNVQPRNMNV. Positions 1-127 are disordered; it reads MNVQPRNMNV…CPGTPPHKTF (127 aa). The span at 111–122 shows a compositional bias: pro residues; sequence PTSPIPECPGTP. A Phosphothreonine; by cdk1 modification is found at Thr186. The region spanning 248 to 518 is the Protein kinase domain; sequence FHELEKIGSG…SVALVKHSVL (271 aa). ATP-binding positions include 254 to 262 and Lys277; that span reads IGSGEFGSV. Residue Asp375 is the Proton acceptor of the active site. Residues Asn380 and Asp412 each contribute to the Mg(2+) site. Residues 526-563 are a coiled coil; that stretch reads AEQLRIELDAEKFKNALLQKELKKAQIAKAAAEERAHF.

Belongs to the protein kinase superfamily. Ser/Thr protein kinase family. WEE1 subfamily. As to quaternary structure, interacts (when phosphorylated at Thr-186) with pin1. In terms of processing, phosphorylation at Thr-186 during M-phase by cdk1 inhibits the kinase activity and leads to interaction with pin1. Zygotically expressed. Present in oocytes and postgastrula embryos (at least until the tailbud stage). Expression begins at the midblastula stage and increases after the early gastrula stage.

It localises to the nucleus. It catalyses the reaction L-tyrosyl-[protein] + ATP = O-phospho-L-tyrosyl-[protein] + ADP + H(+). Its function is as follows. Acts as a zygotic negative regulator of entry into mitosis (G2 to M transition) by protecting the nucleus from cytoplasmically activated cyclin B1-complexed cdk1 before the onset of mitosis by mediating phosphorylation of cdk1 on 'Tyr-15'. Specifically phosphorylates and inactivates cyclin B1-complexed cdk1 reaching a maximum during G2 phase and a minimum as cells enter M phase. Phosphorylation of cyclin B1-cdk1 occurs exclusively on 'Tyr-15' and phosphorylation of monomeric cdk1 does not occur. The polypeptide is Wee1-like protein kinase 1-B (wee1-b) (Xenopus laevis (African clawed frog)).